Reading from the N-terminus, the 365-residue chain is Phosphatidylcholine:ceramide cholinephosphotransferase 2 (365 aa).

A disordered region spans residues 9-50; it reads LEGHLESQTNDSTNTYTSPTEAVEEEGKNGKGKPKTLSNGLR. Residues 14 to 28 are compositionally biased toward polar residues; it reads ESQTNDSTNTYTSPT. 5 helical membrane-spanning segments follow: residues 80-100, 128-148, 159-179, 219-239, and 248-268; these read GIAFVYALFNLILTTVMITVV, FSVSEINGMVLVGLWITQWLF, FFFIMGTLYLYRCITMYVTTL, ILCGDFLFSGHTVVLTLTYLF, and FWWYHLVCWLLSAAGIICILV. H229 is an active-site residue. Catalysis depends on residues H272 and D276. A helical transmembrane segment spans residues 273 to 290; the sequence is YTVDVIIAYYITTRLFWW. Topologically, residues 291–365 are cytoplasmic; it reads YHSMANEKNL…KIGEDNEKST (75 aa). Residues C331, C332, C343, and C348 are each lipidated (S-palmitoyl cysteine).

Belongs to the sphingomyelin synthase family. Palmitoylated on Cys-331, Cys-332, Cys-343 and Cys-348; which plays an important role in plasma membrane localization. In terms of tissue distribution, highest expression is detected in cortical bone, followed by vertebrae, kidney and liver. Expression levels are very low in spleen, muscle, heart, brown fat and thymus. Expressed in macrophages.

It is found in the cell membrane. The protein resides in the golgi apparatus membrane. It carries out the reaction an N-acylsphing-4-enine + a 1,2-diacyl-sn-glycero-3-phosphocholine = a sphingomyelin + a 1,2-diacyl-sn-glycerol. The enzyme catalyses an N-acylsphinganine + a 1,2-diacyl-sn-glycero-3-phosphocholine = an N-acylsphinganine-1-phosphocholine + a 1,2-diacyl-sn-glycerol. The catalysed reaction is an N-acyl-(4R)-4-hydroxysphinganine + a 1,2-diacyl-sn-glycero-3-phosphocholine = an N-acyl-(4R)-4-hydroxysphinganine-phosphocholine + a 1,2-diacyl-sn-glycerol. It catalyses the reaction an N-acylsphing-4-enine + a 1,2-diacyl-sn-glycero-3-phosphoethanolamine = an N-acylsphing-4-enine 1-phosphoethanolamine + a 1,2-diacyl-sn-glycerol. It carries out the reaction an N-acylsphinganine + a 1,2-diacyl-sn-glycero-3-phosphoethanolamine = an N-acylsphinganine-1-phosphoethanolamine + a 1,2-diacyl-sn-glycerol. The enzyme catalyses an N-acyl-(4R)-4-hydroxysphinganine + a 1,2-diacyl-sn-glycero-3-phosphoethanolamine = an N-acyl-(4R)-4-hydroxysphinganine-1-phosphoethanolamine + a 1,2-diacyl-sn-glycerol. The catalysed reaction is 1,2-dihexadecanoyl-sn-glycero-3-phosphocholine + an N-acylsphing-4-enine = 1,2-dihexadecanoyl-sn-glycerol + a sphingomyelin. It catalyses the reaction 1-(9Z-octadecenoyl)-2-acyl-sn-3-glycerol + a sphingomyelin = a 1-(9Z-octadecenoyl)-2-acyl-sn-glycero-3-phosphocholine + an N-acylsphing-4-enine. It carries out the reaction N-hexadecanoylsphinganine + a 1,2-diacyl-sn-glycero-3-phosphocholine = N-hexadecanoyl-sphinganine-1-phosphocholine + a 1,2-diacyl-sn-glycerol. The enzyme catalyses N-hexadecanoyl-(4R)-hydroxysphinganine + a 1,2-diacyl-sn-glycero-3-phosphocholine = N-hexadecanoyl-(4R)-hydroxysphinganine-phosphocholine + a 1,2-diacyl-sn-glycerol. The catalysed reaction is N-hexadecanoylsphinganine + a 1,2-diacyl-sn-glycero-3-phosphoethanolamine = N-hexadecanoyl-sphinganine-1-phosphoethanolamine + a 1,2-diacyl-sn-glycerol. It catalyses the reaction N-hexadecanoyl-(4R)-hydroxysphinganine + a 1,2-diacyl-sn-glycero-3-phosphoethanolamine = N-hexadecanoyl-(4R)-hydroxysphinganine-1-phosphoethanolamine + a 1,2-diacyl-sn-glycerol. It participates in sphingolipid metabolism. In terms of biological role, sphingomyelin synthase that primarily contributes to sphingomyelin synthesis and homeostasis at the plasma membrane. Catalyzes the reversible transfer of phosphocholine moiety in sphingomyelin biosynthesis: in the forward reaction transfers phosphocholine head group of phosphatidylcholine (PC) on to ceramide (CER) to form ceramide phosphocholine (sphingomyelin, SM) and diacylglycerol (DAG) as by-product, and in the reverse reaction transfers phosphocholine from SM to DAG to form PC and CER. The direction of the reaction appears to depend on the levels of CER and DAG in the plasma membrane. Does not use free phosphorylcholine or CDP-choline as donors. Can also transfer phosphoethanolamine head group of phosphatidylethanolamine (PE) on to ceramide (CER) to form ceramide phosphoethanolamine (CPE). Regulates receptor-mediated signal transduction via mitogenic DAG and proapoptotic CER, as well as via SM, a structural component of membrane rafts that serve as platforms for signal transduction and protein sorting. To a lesser extent, plays a role in secretory transport via regulation of DAG pool at the Golgi apparatus and its downstream effects on PRKD1. Required for normal bone matrix mineralization. The chain is Phosphatidylcholine:ceramide cholinephosphotransferase 2 (Sgms2) from Mus musculus (Mouse).